The chain runs to 271 residues: MSEKPVIFFDSGIGGLTVLKEARILIPELQFVYVADDAGFPYGAWEEDVLKGRILKVFTNLLKLYTPALCVIACNTASTLMISDLRQEFPHIPFVGTVPAIKSAAAQTKSGLISVLATPGTVKRAYTHELISSFANQCHVELVGSKKLATFAENYLRGYPIDYEELRHEILPCFVEKNGKYTDVIVLACTHYPFLISLFHKQALWSVNWIDPAKAIARHTRSLLLETMKNKSSKKNIKNYALFTSQNIDFVTERLLQRFNLNIMKGVDFGV.

Residues 10–11 (DS) and 42–43 (YG) each bind substrate. Catalysis depends on Cys74, which acts as the Proton donor/acceptor. Substrate is bound at residue 75–76 (NT). Cys189 serves as the catalytic Proton donor/acceptor. 190–191 (TH) serves as a coordination point for substrate.

It belongs to the aspartate/glutamate racemases family.

The catalysed reaction is L-glutamate = D-glutamate. The protein operates within cell wall biogenesis; peptidoglycan biosynthesis. Provides the (R)-glutamate required for cell wall biosynthesis. In Bartonella bacilliformis (strain ATCC 35685 / KC583 / Herrer 020/F12,63), this protein is Glutamate racemase.